Consider the following 210-residue polypeptide: Pyridoxine/pyridoxamine 5'-phosphate oxidase (210 aa).

Residues 7 to 10 and K65 contribute to the substrate site; that span reads REDY. Residues 60-65, 75-76, R81, K82, and Q104 contribute to the FMN site; these read RMVLLK and FT. Substrate-binding residues include Y122, R126, and S130. Residues 139 to 140 and W183 each bind FMN; that span reads QS. Residue 189–191 coordinates substrate; the sequence is RLH. FMN is bound at residue R193.

The protein belongs to the pyridoxamine 5'-phosphate oxidase family. In terms of assembly, homodimer. FMN serves as cofactor.

It catalyses the reaction pyridoxamine 5'-phosphate + O2 + H2O = pyridoxal 5'-phosphate + H2O2 + NH4(+). The catalysed reaction is pyridoxine 5'-phosphate + O2 = pyridoxal 5'-phosphate + H2O2. It functions in the pathway cofactor metabolism; pyridoxal 5'-phosphate salvage; pyridoxal 5'-phosphate from pyridoxamine 5'-phosphate: step 1/1. Its pathway is cofactor metabolism; pyridoxal 5'-phosphate salvage; pyridoxal 5'-phosphate from pyridoxine 5'-phosphate: step 1/1. In terms of biological role, catalyzes the oxidation of either pyridoxine 5'-phosphate (PNP) or pyridoxamine 5'-phosphate (PMP) into pyridoxal 5'-phosphate (PLP). This Neisseria meningitidis serogroup C (strain 053442) protein is Pyridoxine/pyridoxamine 5'-phosphate oxidase.